The sequence spans 164 residues: S-ribosylhomocysteine lyase (164 aa).

Fe cation is bound by residues His54, His58, and Cys128.

It belongs to the LuxS family. Homodimer. Fe cation serves as cofactor.

It catalyses the reaction S-(5-deoxy-D-ribos-5-yl)-L-homocysteine = (S)-4,5-dihydroxypentane-2,3-dione + L-homocysteine. In terms of biological role, involved in the synthesis of autoinducer 2 (AI-2) which is secreted by bacteria and is used to communicate both the cell density and the metabolic potential of the environment. The regulation of gene expression in response to changes in cell density is called quorum sensing. Catalyzes the transformation of S-ribosylhomocysteine (RHC) to homocysteine (HC) and 4,5-dihydroxy-2,3-pentadione (DPD). The polypeptide is S-ribosylhomocysteine lyase (Campylobacter hominis (strain ATCC BAA-381 / DSM 21671 / CCUG 45161 / LMG 19568 / NCTC 13146 / CH001A)).